A 527-amino-acid polypeptide reads, in one-letter code: Tetanolysin (527 aa).

The signal sequence occupies residues 1-32 (MNKNVLKFVSRSLLIFSMTGLISNYNSSNVLA). Beta stranded transmembrane passes span 215-228 (QSQL…NFKA), 235-244 (IDFDSIFKGE), 313-322 (SSHVKAAFKA), and 330-342 (SSNA…LNQS). Positions 484 to 494 (ECTGLAWEWWR) match the Conserved undecapeptide motif. The short motif at 516-517 (TL) is the Cholesterol binding element.

Belongs to the cholesterol-dependent cytolysin family. In terms of assembly, homooligomeric pore complex containing 35-50 subunits; when inserted in the host membrane. In terms of processing, purified 48 and 53 kDa proteins with 4 different pIs (6.1, 5.6, 5.3 and 6.6) in decreasing order of activity.

It localises to the secreted. It is found in the host cell membrane. Cytolysis of host cells is inhibited by cholesterol. Functionally, a cholesterol-dependent toxin that causes cytolysis by forming pores in cholesterol-containing host membranes. After binding to target membranes, the protein undergoes a major conformation change, leading to its insertion in the host membrane and formation of an oligomeric pore complex. Cholesterol is required for binding to host membranes, membrane insertion and pore formation; cholesterol binding is mediated by a Thr-Leu pair in the C-terminus. This chain is Tetanolysin, found in Clostridium tetani (strain Massachusetts / E88).